The primary structure comprises 522 residues: Glucans biosynthesis protein G (522 aa).

Residues 1–33 form the signal peptide; sequence MLDNKFGFKQRVASLRWLSAAIMLSVSAVPAWA.

This sequence belongs to the OpgD/OpgG family.

It localises to the periplasm. It functions in the pathway glycan metabolism; osmoregulated periplasmic glucan (OPG) biosynthesis. Functionally, involved in the biosynthesis of osmoregulated periplasmic glucans (OPGs). The protein is Glucans biosynthesis protein G of Pectobacterium carotovorum subsp. carotovorum (strain PC1).